Reading from the N-terminus, the 225-residue chain is Octanoyltransferase (225 aa).

One can recognise a BPL/LPL catalytic domain in the interval 37 to 217; sequence SDTPDEFWVV…ELASLIGYQT (181 aa). Residues 76–83, 148–150, and 161–163 each bind substrate; these read RGGQVTYH, SLG, and GLA. The active-site Acyl-thioester intermediate is the C179.

Belongs to the LipB family.

Its subcellular location is the cytoplasm. It carries out the reaction octanoyl-[ACP] + L-lysyl-[protein] = N(6)-octanoyl-L-lysyl-[protein] + holo-[ACP] + H(+). Its pathway is protein modification; protein lipoylation via endogenous pathway; protein N(6)-(lipoyl)lysine from octanoyl-[acyl-carrier-protein]: step 1/2. Catalyzes the transfer of endogenously produced octanoic acid from octanoyl-acyl-carrier-protein onto the lipoyl domains of lipoate-dependent enzymes. Lipoyl-ACP can also act as a substrate although octanoyl-ACP is likely to be the physiological substrate. This Aeromonas salmonicida (strain A449) protein is Octanoyltransferase.